The primary structure comprises 372 residues: Protein Wnt-1 (372 aa).

Positions 1–29 (MLKSTQVILIFILLISIVESLSWLALGLA) are cleaved as a signal peptide. 3 cysteine pairs are disulfide-bonded: cysteine 77–cysteine 88, cysteine 130–cysteine 138, and cysteine 140–cysteine 158. Asparagine 87 carries N-linked (GlcNAc...) asparagine glycosylation. Asparagine 187 is a glycosylation site (N-linked (GlcNAc...) asparagine). 8 cysteine pairs are disulfide-bonded: cysteine 225–cysteine 239, cysteine 227–cysteine 234, cysteine 301–cysteine 332, cysteine 317–cysteine 327, cysteine 331–cysteine 371, cysteine 347–cysteine 362, cysteine 349–cysteine 359, and cysteine 354–cysteine 355. Serine 231 carries O-palmitoleoyl serine; by mom-1 lipidation.

Belongs to the Wnt family. Post-translationally, palmitoleoylation is required for efficient binding to frizzled receptors. Depalmitoleoylation leads to Wnt signaling pathway inhibition. In terms of tissue distribution, expressed in intestine, some head neurons and ventral nerve cord and pharyngeal neurons. Expressed in the tail and weakly expressed in the vulva and body wall muscles. Expressed highly in posterior dorsal and ventral muscle cells.

It is found in the secreted. The protein resides in the extracellular space. It localises to the extracellular matrix. The protein localises to the cytoplasm. Its subcellular location is the cell membrane. Its function is as follows. Ligand for members of the frizzled family of seven transmembrane receptors. Probable developmental protein. May be a signaling molecule which affects the development of discrete regions of tissues. Is likely to signal over only few cell diameters. Binds receptor tyrosine kinase cam-1. Together with Wnt ligand cwn-2, regulates the migration of CAN, ALM, BDU and HSN neurons during embryogenesis, the migration of QL and QR neuroblast descendants during larval development, and polarity of ALM neurons. Also acts with the Wnt ligand egl-20 to direct HSN neuron migration. Acts through the Wnt receptor cfz-2 to direct ALM migration. Also plays a role in axon growth and guidance in HSN and male CP neurons. In addition, together with Wnt ligand cwn-2, negatively regulates developmental neurite pruning of AIM neurons probably by acting as a ligand for receptor tyrosine kinase cam-1. Probably by activating the Wnt/Frizzled pathway, may regulate vulva development. May act redundantly with other Wnt ligands such as cwn-2 and mom-2 to control seam cell polarity. The sequence is that of Protein Wnt-1 (cwn-1) from Caenorhabditis elegans.